Here is a 97-residue protein sequence, read N- to C-terminus: Aspartyl/glutamyl-tRNA(Asn/Gln) amidotransferase subunit C (97 aa).

The segment at 74–97 (AEQALDQAPASQRDRFEVPRILGE) is disordered. The segment covering 85–97 (QRDRFEVPRILGE) has biased composition (basic and acidic residues).

Belongs to the GatC family. As to quaternary structure, heterotrimer of A, B and C subunits.

It carries out the reaction L-glutamyl-tRNA(Gln) + L-glutamine + ATP + H2O = L-glutaminyl-tRNA(Gln) + L-glutamate + ADP + phosphate + H(+). The enzyme catalyses L-aspartyl-tRNA(Asn) + L-glutamine + ATP + H2O = L-asparaginyl-tRNA(Asn) + L-glutamate + ADP + phosphate + 2 H(+). Functionally, allows the formation of correctly charged Asn-tRNA(Asn) or Gln-tRNA(Gln) through the transamidation of misacylated Asp-tRNA(Asn) or Glu-tRNA(Gln) in organisms which lack either or both of asparaginyl-tRNA or glutaminyl-tRNA synthetases. The reaction takes place in the presence of glutamine and ATP through an activated phospho-Asp-tRNA(Asn) or phospho-Glu-tRNA(Gln). The sequence is that of Aspartyl/glutamyl-tRNA(Asn/Gln) amidotransferase subunit C from Corynebacterium kroppenstedtii (strain DSM 44385 / JCM 11950 / CIP 105744 / CCUG 35717).